The primary structure comprises 414 residues: Na(+)-translocating NADH-quinone reductase subunit B (414 aa).

4 helical membrane passes run 23 to 40 (WFAL…PGLV), 56 to 76 (IMIM…YNAG), 129 to 149 (FLPI…LFCM), and 164 to 184 (ILFA…LGIT). The residue at position 236 (threonine 236) is an FMN phosphoryl threonine. 5 helical membrane passes run 268–288 (IPGS…AMIV), 297–317 (IIAG…VVGS), 325–345 (MPWH…FMAT), 358–378 (WWYG…NPAY), and 381–401 (GMML…HVVI).

This sequence belongs to the NqrB/RnfD family. Composed of six subunits; NqrA, NqrB, NqrC, NqrD, NqrE and NqrF. It depends on FMN as a cofactor.

It is found in the cell inner membrane. The catalysed reaction is a ubiquinone + n Na(+)(in) + NADH + H(+) = a ubiquinol + n Na(+)(out) + NAD(+). In terms of biological role, NQR complex catalyzes the reduction of ubiquinone-1 to ubiquinol by two successive reactions, coupled with the transport of Na(+) ions from the cytoplasm to the periplasm. NqrA to NqrE are probably involved in the second step, the conversion of ubisemiquinone to ubiquinol. The protein is Na(+)-translocating NADH-quinone reductase subunit B of Vibrio parahaemolyticus serotype O3:K6 (strain RIMD 2210633).